A 284-amino-acid chain; its full sequence is Dihydropteroate synthase (284 aa).

Residues 6–265 (VQVIGVLNVT…DVRASVDALK (260 aa)) enclose the Pterin-binding domain. Asparagine 13 is a Mg(2+) binding site. (7,8-dihydropterin-6-yl)methyl diphosphate-binding positions include threonine 53, aspartate 86, asparagine 105, aspartate 177, lysine 213, and 253–255 (RVH).

It belongs to the DHPS family. As to quaternary structure, homodimer. Mg(2+) serves as cofactor.

It carries out the reaction (7,8-dihydropterin-6-yl)methyl diphosphate + 4-aminobenzoate = 7,8-dihydropteroate + diphosphate. It functions in the pathway cofactor biosynthesis; tetrahydrofolate biosynthesis; 7,8-dihydrofolate from 2-amino-4-hydroxy-6-hydroxymethyl-7,8-dihydropteridine diphosphate and 4-aminobenzoate: step 1/2. Is potently inhibited by the sulfone dapsone and the two sulfonamides sulfamethoxazole and sulfamethoxypyridazine, with Kis in the range of 12 to 32 nM. To a lesser extent, is also inhibited by p-aminosalicylate (PAS). Functionally, catalyzes the condensation of para-aminobenzoate (pABA) with 6-hydroxymethyl-7,8-dihydropterin diphosphate (DHPt-PP) to form 7,8-dihydropteroate, the immediate precursor of folate derivatives. The protein is Dihydropteroate synthase (folP1) of Mycobacterium leprae (strain TN).